We begin with the raw amino-acid sequence, 491 residues long: Cobyric acid synthase (491 aa).

The 192-residue stretch at 250-441 (DLQITVVRLP…LHGLFDNGPW (192 aa)) folds into the GATase cobBQ-type domain. Cysteine 331 functions as the Nucleophile in the catalytic mechanism. Histidine 433 is an active-site residue.

The protein belongs to the CobB/CobQ family. CobQ subfamily.

It participates in cofactor biosynthesis; adenosylcobalamin biosynthesis. Functionally, catalyzes amidations at positions B, D, E, and G on adenosylcobyrinic A,C-diamide. NH(2) groups are provided by glutamine, and one molecule of ATP is hydrogenolyzed for each amidation. This is Cobyric acid synthase from Trichormus variabilis (strain ATCC 29413 / PCC 7937) (Anabaena variabilis).